A 531-amino-acid chain; its full sequence is UDP-glucuronosyltransferase 1A6 (531 aa).

The signal sequence occupies residues 1–26 (MACLLPAAQTLPAGFLFLVLWASVLG). N-linked (GlcNAc...) asparagine glycosylation is found at Asn293 and Asn431. Residues 489–505 (VIGFLLAIVLTVVFIVF) form a helical membrane-spanning segment.

Belongs to the UDP-glycosyltransferase family. As to expression, expressed in liver, kidney and at very low levels in colon.

The protein resides in the microsome. Its subcellular location is the endoplasmic reticulum membrane. It catalyses the reaction glucuronate acceptor + UDP-alpha-D-glucuronate = acceptor beta-D-glucuronoside + UDP + H(+). The enzyme catalyses (5Z,8Z,11Z,14Z)-eicosatetraenoate + UDP-alpha-D-glucuronate = O-[(5Z),(8Z),(11Z),(14Z)-eicosatetraenoyl]-beta-D-glucuronate + UDP. It carries out the reaction 15-hydroxy-(5Z,8Z,11Z,13E)-eicosatetraenoate + UDP-alpha-D-glucuronate = 15-O-(beta-D-glucuronosyl)-(5Z,8Z,11Z,14Z)-eicosatetraenoate + UDP + H(+). The catalysed reaction is (E)-ferulate + UDP-alpha-D-glucuronate = (E)-4-O-(beta-D-glucuronosyl)-ferulate + UDP + H(+). It catalyses the reaction (E)-ferulate + UDP-alpha-D-glucuronate = (E)-ferulic acid beta-D-glucuronate ester + UDP. In terms of biological role, UDP-glucuronosyltransferase (UGT) that catalyzes phase II biotransformation reactions in which lipophilic substrates are conjugated with glucuronic acid to facilitate their inactivation and excretion from the body. Essential for the elimination and detoxification of drugs, xenobiotics and endogenous compounds. Involved in the glucuronidation of arachidonic acid (AA) and AA-derived eicosanoids including 15-HETE and 20-HETE. Conjugates small planar phenolic molecules such as 4-nitrophenol, 1-naphthol, and 4-methylumbelliferone. The bulky phenol 4-hydroxybiphenyl, androgens and estrogens are not substrates. 2-hydroxybiphenyl is an excellent substrate. Involved in the glucuronidation of the phytochemical ferulic acid at the phenolic or the carboxylic acid group. This chain is UDP-glucuronosyltransferase 1A6, found in Mus musculus (Mouse).